A 95-amino-acid polypeptide reads, in one-letter code: ESAT-6-like protein EsxA (95 aa).

Belongs to the WXG100 family. ESAT-6 subfamily. In terms of assembly, forms a tight 1:1 complex with EsxB. An artificial EsxA-EsxB heterodimer interacts with EspA.

The protein localises to the secreted. In terms of biological role, an exported protein. Unlike its M.tuberculosis counterpart has poor pore forming ability in artificial liposomes, does not undergo conformational change at acidic pH. Mutation of 2 residues to those found in M.tuberculosis (25-TA-26 to IH) alters the properties of this protein so that it inserts into liposomes at acidic pH, forming pores, like its M.tuberculosis counterpart. This is ESAT-6-like protein EsxA from Mycolicibacterium smegmatis (strain ATCC 700084 / mc(2)155) (Mycobacterium smegmatis).